The primary structure comprises 549 residues: Glucose-6-phosphate isomerase (549 aa).

Glu-355 (proton donor) is an active-site residue. Catalysis depends on residues His-387 and Lys-515.

The protein belongs to the GPI family.

Its subcellular location is the cytoplasm. The enzyme catalyses alpha-D-glucose 6-phosphate = beta-D-fructose 6-phosphate. It participates in carbohydrate biosynthesis; gluconeogenesis. Its pathway is carbohydrate degradation; glycolysis; D-glyceraldehyde 3-phosphate and glycerone phosphate from D-glucose: step 2/4. In terms of biological role, catalyzes the reversible isomerization of glucose-6-phosphate to fructose-6-phosphate. The protein is Glucose-6-phosphate isomerase of Histophilus somni (strain 2336) (Haemophilus somnus).